A 330-amino-acid polypeptide reads, in one-letter code: Aspartate--ammonia ligase (330 aa).

This sequence belongs to the class-II aminoacyl-tRNA synthetase family. AsnA subfamily.

It is found in the cytoplasm. The enzyme catalyses L-aspartate + NH4(+) + ATP = L-asparagine + AMP + diphosphate + H(+). The protein operates within amino-acid biosynthesis; L-asparagine biosynthesis; L-asparagine from L-aspartate (ammonia route): step 1/1. This Streptococcus pneumoniae serotype 2 (strain D39 / NCTC 7466) protein is Aspartate--ammonia ligase.